The following is a 607-amino-acid chain: Cyclic-di-GMP receptor FimW (607 aa).

The tract at residues 323 to 492 (ERTFQRTQGQ…GGTQMGIEMI (170 aa)) is pilZ-like domain. The RXXXR motif motif lies at 324–328 (RTFQR). The D/NXSXXG motif signature appears at 435-440 (NHSPGG). A compositionally biased stretch (polar residues) spans 568 to 582 (SQFEYRSAEPVNTPS). Positions 568-607 (SQFEYRSAEPVNTPSDKPVTAPVARPPAGEEDFDSLWKSL) are disordered.

As to quaternary structure, monomer in the absence of c-di-GMP. Forms dimers in the presence of c-di-GMP.

Its subcellular location is the cytoplasm. Its function is as follows. High-affinity cyclic-di-GMP binding protein that regulates type IV pili (T4P) elongation. Required for T4P-mediated surface attachment and walking motility during the early phases of surface colonization. Not required for twitching motility. Does not bind related nucleotides such as GMP, GDP, GTP or ATP. The polypeptide is Cyclic-di-GMP receptor FimW (Pseudomonas aeruginosa (strain ATCC 15692 / DSM 22644 / CIP 104116 / JCM 14847 / LMG 12228 / 1C / PRS 101 / PAO1)).